The primary structure comprises 456 residues: Argininosuccinate lyase (456 aa).

Belongs to the lyase 1 family. Argininosuccinate lyase subfamily.

The protein resides in the cytoplasm. The enzyme catalyses 2-(N(omega)-L-arginino)succinate = fumarate + L-arginine. The protein operates within amino-acid biosynthesis; L-arginine biosynthesis; L-arginine from L-ornithine and carbamoyl phosphate: step 3/3. The polypeptide is Argininosuccinate lyase (Listeria innocua serovar 6a (strain ATCC BAA-680 / CLIP 11262)).